The sequence spans 230 residues: Peptidyl-prolyl cis-trans isomerase FKBP16-4, chloroplastic (230 aa).

The N-terminal 56 residues, 1–56 (MILTMKLVHPLHHSLSSSIPFPSRKRQSKPYRCSLPSPGCEKVIRTETVLPPAPVS), are a transit peptide targeting the chloroplast. The region spanning 123-217 (GSRVAVHYVA…ELDIELLSIK (95 aa)) is the PPIase FKBP-type domain.

It belongs to the FKBP-type PPIase family.

It is found in the plastid. It localises to the chloroplast thylakoid lumen. It carries out the reaction [protein]-peptidylproline (omega=180) = [protein]-peptidylproline (omega=0). PPIases accelerate the folding of proteins. It catalyzes the cis-trans isomerization of proline imidic peptide bonds in oligopeptides. The protein is Peptidyl-prolyl cis-trans isomerase FKBP16-4, chloroplastic (FKBP16-4) of Arabidopsis thaliana (Mouse-ear cress).